The chain runs to 378 residues: 2-aminoethylphosphonate--pyruvate transaminase 1 (378 aa).

K194 bears the N6-(pyridoxal phosphate)lysine mark.

It belongs to the class-V pyridoxal-phosphate-dependent aminotransferase family. PhnW subfamily. Homodimer. It depends on pyridoxal 5'-phosphate as a cofactor.

The enzyme catalyses (2-aminoethyl)phosphonate + pyruvate = phosphonoacetaldehyde + L-alanine. Its function is as follows. Involved in phosphonate degradation. This chain is 2-aminoethylphosphonate--pyruvate transaminase 1, found in Cupriavidus pinatubonensis (strain JMP 134 / LMG 1197) (Cupriavidus necator (strain JMP 134)).